A 270-amino-acid polypeptide reads, in one-letter code: Putative carbamate hydrolase RutD (270 aa).

This sequence belongs to the AB hydrolase superfamily. Hydrolase RutD family.

The catalysed reaction is carbamate + 2 H(+) = NH4(+) + CO2. Involved in pyrimidine catabolism. May facilitate the hydrolysis of carbamate, a reaction that can also occur spontaneously. This chain is Putative carbamate hydrolase RutD, found in Escherichia coli O44:H18 (strain 042 / EAEC).